A 333-amino-acid polypeptide reads, in one-letter code: Atrochrysone carboxyl ACP thioesterase (333 aa).

Zn(2+) contacts are provided by His104, His106, Asp108, and His109. The active-site Proton donor/acceptor is Asp108.

This sequence belongs to the metallo-beta-lactamase superfamily. Requires Zn(2+) as cofactor.

The enzyme catalyses atrochrysone carboxyl-[ACP] + H2O = atrochrysone carboxylate + holo-[ACP] + H(+). It participates in pigment biosynthesis. Atrochrysone carboxyl ACP thioesterase; part of the gene cluster that mediates the biosynthesis of the bianthraquinone cladofulvin, a conidial pigment not required for virulence but that plays a role in fitness and resistance to environmental stresses including UV light and low-temperature stress. The pathway begins with the synthesis of atrochrysone thioester by the polyketide synthase (PKS) claG. The atrochrysone carboxyl ACP thioesterase claF then breaks the thioester bond and releases the atrochrysone carboxylic acid from claG. This compound is decarboxylated by claH to yield emodin, which is further converted to chrysophanol hydroquinone by the reductase claC and the dehydratase claB. The cytochrome P450 monooxygenase claM then catalyzes the dimerization of nataloe-emodin to cladofulvin. In Passalora fulva (Tomato leaf mold), this protein is Atrochrysone carboxyl ACP thioesterase.